The sequence spans 151 residues: Large ribosomal subunit protein bL9 (151 aa).

The protein belongs to the bacterial ribosomal protein bL9 family.

Functionally, binds to the 23S rRNA. The sequence is that of Large ribosomal subunit protein bL9 from Bordetella bronchiseptica (strain ATCC BAA-588 / NCTC 13252 / RB50) (Alcaligenes bronchisepticus).